We begin with the raw amino-acid sequence, 176 residues long: MNPKRLRITGPEDLTDAYDTMPFRCLNGSMPPKTPLNFVFKENDSHVSNGVGLKKDCIESIDDLNLDDWSEQQESILLMCYENELQKPITCTPMGPICLWAPPEPVLRSVHNTLLKMGWSISEKKMKKKLLELLAKNKKRRTMRKLEIDTNLSFLTDVQRDSPIIENAPLQSPFHF.

This is an uncharacterized protein from Schizosaccharomyces pombe (strain 972 / ATCC 24843) (Fission yeast).